We begin with the raw amino-acid sequence, 376 residues long: N-acetyldiaminopimelate deacetylase (376 aa).

The active site involves Asp-69. Residue Glu-128 is the Proton acceptor of the active site.

This sequence belongs to the peptidase M20A family. N-acetyldiaminopimelate deacetylase subfamily.

It carries out the reaction N-acetyl-(2S,6S)-2,6-diaminopimelate + H2O = (2S,6S)-2,6-diaminopimelate + acetate. It functions in the pathway amino-acid biosynthesis; L-lysine biosynthesis via DAP pathway; LL-2,6-diaminopimelate from (S)-tetrahydrodipicolinate (acetylase route): step 3/3. In terms of biological role, catalyzes the conversion of N-acetyl-diaminopimelate to diaminopimelate and acetate. In Bacillus cereus (strain ATCC 14579 / DSM 31 / CCUG 7414 / JCM 2152 / NBRC 15305 / NCIMB 9373 / NCTC 2599 / NRRL B-3711), this protein is N-acetyldiaminopimelate deacetylase.